Here is a 366-residue protein sequence, read N- to C-terminus: Isopentenyl-diphosphate delta-isomerase (366 aa).

Residue 6-7 (RK) participates in substrate binding. FMN-binding positions include threonine 63, 64–66 (GMT), serine 94, and asparagine 123. 94-96 (SQR) lines the substrate pocket. Position 158 (glutamine 158) interacts with substrate. Glutamate 159 contributes to the Mg(2+) binding site. Residues lysine 191, serine 216, threonine 221, 273-275 (GIR), and 294-295 (AN) each bind FMN.

It belongs to the IPP isomerase type 2 family. As to quaternary structure, homooctamer. Dimer of tetramers. FMN serves as cofactor. It depends on NADPH as a cofactor. The cofactor is Mg(2+).

The protein localises to the cytoplasm. It catalyses the reaction isopentenyl diphosphate = dimethylallyl diphosphate. Its function is as follows. Involved in the biosynthesis of isoprenoids. Catalyzes the 1,3-allylic rearrangement of the homoallylic substrate isopentenyl (IPP) to its allylic isomer, dimethylallyl diphosphate (DMAPP). This chain is Isopentenyl-diphosphate delta-isomerase, found in Metallosphaera sedula (strain ATCC 51363 / DSM 5348 / JCM 9185 / NBRC 15509 / TH2).